Here is a 217-residue protein sequence, read N- to C-terminus: Ribonuclease HII (217 aa).

The RNase H type-2 domain occupies 17–207 (KVIYGVDEAG…CVGQSVSGAR (191 aa)). A divalent metal cation contacts are provided by Asp23, Glu24, and Asp116.

This sequence belongs to the RNase HII family. Mn(2+) serves as cofactor. Requires Mg(2+) as cofactor.

The protein resides in the cytoplasm. The catalysed reaction is Endonucleolytic cleavage to 5'-phosphomonoester.. Functionally, endonuclease that specifically degrades the RNA of RNA-DNA hybrids. The polypeptide is Ribonuclease HII (Nitrosomonas europaea (strain ATCC 19718 / CIP 103999 / KCTC 2705 / NBRC 14298)).